We begin with the raw amino-acid sequence, 1199 residues long: MLDVNNFEYMNIGLASPDKIRSWSFGEVKKPETINYRTLKPEKDGLFCERIFGPTKDWECHCGKYKRVRYKGVVCDRCGVEVTRAKVRRERMGHIELAAPVSHIWYFKGIPSRMGLVLDMSPRALEEVIYFASYVVTDPANTPLEKKQLLSEKEYRAYLDKYGNKFQASMGAEAINKLLQDIDLVKEVDMLKEELKTSQGQRRTRAIKRLEVLEAFRNSGNKPSWMILDVLPVIPPELRPMVQLDGGRFATSDLNDLYRRVINRNNRLKRLLDLGAPSIIVQNEKRMLQEAVDALIDNGRRGRPVTGPGNRPLKSLSHMLKGKQGRFRQNLLGKRVDYSGRSVIVVGPHLKMYQCGLPKEMALELFKPFVMKELVEKGLAHNIKSAKRKIERVQPEVWDVLESVIKEHPVLLNRAPTLHRLGIQAFEPTLVEGRAIRLHPLVCTAYNADFDGDQMAVHVPLSAEAQAEARILMLAAQNILNPKDGKPVVTPSQDMVLGNYYLTLERAGAVGEGMVFKNTDEALLAYQNGYVHLHTRVAVAANSLKNVTFTEEQRSKLLITTVGKLVFNEILPESFPYMNEPTKSNIEEKTPDRFFLDKGADVKAVIAEQPINAPFKKGILGKIIAEIFKRFHITETSKMLDRMKNLGFRYSTKAGITVGVSDIVVLDDKQEILEEAQSKVDNVLKQFRRGLITEEERYERVISIWSSAKDVIQGKLMKSLDEVNPIYMMSDSGARGNASNFTQLAGMRGLMANPAGRIIELPIKSSFREGLTVLEYFISTHGARKGLADTALKTADSGYLTRRLVDVAQDVIIRETDCGTDRGILAKPLKEGTEIIERLEERLIGRFARKQIKHPETGAVLINENELIDEDKALEIVEAGIEEVWIRSAFTCNTPHGVCKRCYGRNLATGTDVEVGEAVGIIAAQSIGEPGTQLTMRTFHTGGVAGDDITQGLPRIQELFEARNPKGQATISEIDGTIAEINEVRDKQQEIVVQGAVETRSYTAPYNSRLKVAEGDQITRGQVLTEGSIDPKELLKVTDLTTVQEYLLHEVQKVYRMQGVEIGDKHVEVMVRQMLRKVRVIDAGDTDVLPGTLLDIHQFTEANKKVLLEGNRPATGRPVLLGITKASLETDSFLSAASFQETTRVLTDAAIKGKRDELLGLKENVIIGKLVPAGTGMMNYRKVKPVSNVQPTEDMVPAE.

The Zn(2+) site is built by cysteine 60, cysteine 62, cysteine 75, and cysteine 78. Mg(2+) contacts are provided by aspartate 449, aspartate 451, and aspartate 453. Zn(2+) is bound by residues cysteine 818, cysteine 892, cysteine 899, and cysteine 902.

The protein belongs to the RNA polymerase beta' chain family. As to quaternary structure, the RNAP catalytic core consists of 2 alpha, 1 beta, 1 beta' and 1 omega subunit. When a sigma factor is associated with the core the holoenzyme is formed, which can initiate transcription. The cofactor is Mg(2+). It depends on Zn(2+) as a cofactor.

It carries out the reaction RNA(n) + a ribonucleoside 5'-triphosphate = RNA(n+1) + diphosphate. Functionally, DNA-dependent RNA polymerase catalyzes the transcription of DNA into RNA using the four ribonucleoside triphosphates as substrates. This chain is DNA-directed RNA polymerase subunit beta', found in Bacillus velezensis (strain DSM 23117 / BGSC 10A6 / LMG 26770 / FZB42) (Bacillus amyloliquefaciens subsp. plantarum).